Consider the following 644-residue polypeptide: G-protein coupled receptor-associated protein LMBRD2 (644 aa).

At 1–4 (MGTV) the chain is on the extracellular side. A helical transmembrane segment spans residues 5 to 27 (SLAVQLFIVFLLTSYLLNKYSTI). The Cytoplasmic portion of the chain corresponds to 28 to 31 (RKQN). The helical transmembrane segment at 32–52 (PIVTISTFIGWYFSLIIVFVL) threads the bilayer. At 53–102 (PLDVAITFFHKCENDRQRVLNTTSTPAPIVPECELPGGYVPDDVLFDLWR) the chain is on the extracellular side. N-linked (GlcNAc...) asparagine glycosylation is present at Asn73. A helical membrane pass occupies residues 103–123 (VVYWSAQILTWLILPLLQSYV). Residues 124–145 (TAGNFTIFGKIRAAVINNTVYY) are Cytoplasmic-facing. Residues 146-166 (AIYSLCFLAILIYAMFKGVSI) traverse the membrane as a helical segment. At 167–172 (NIENLK) the chain is on the extracellular side. The helical transmembrane segment at 173–193 (VILVSASNTWGLFLLVVLLGH) threads the bilayer. The Cytoplasmic segment spans residues 194-369 (GLVELPRSLW…RLQTPFCRVL (176 aa)). A coiled-coil region spans residues 216–245 (YFDIEKLASEKSEAEENVKEIYKKVRVLFN). A helical transmembrane segment spans residues 370–390 (GVVTVFMTFFVLFSECTFFVV). The Extracellular portion of the chain corresponds to 391-412 (SYTVSPAAFVTEYASNRFHYKY). Residues 413–433 (TQFVAFGIIVYLITCAYFTIF) traverse the membrane as a helical segment. Residues 434-453 (RLQIYKYYHLDPNGHTDENS) lie on the Cytoplasmic side of the membrane. The chain crosses the membrane as a helical span at residues 454–474 (ILFSAILLCRLTPPICLNFLG). Over 475–502 (MIHMDSHVSMAKSFGVETQFTKLMGHLD) the chain is Extracellular. A helical membrane pass occupies residues 503–523 (VIPILAKGINIYLPICIILLC). At 524-644 (AIHYYRVGAY…PSSSGFFDDM (121 aa)) the chain is on the cytoplasmic side. Basic and acidic residues predominate over residues 567 to 576 (SIKRSNERNQ). Residues 567-644 (SIKRSNERNQ…PSSSGFFDDM (78 aa)) form a disordered region. The span at 578-594 (NQSWTNTITSNTSTTSN) shows a compositional bias: low complexity. The segment covering 621–644 (VSSTTRISLSPTEHPSSSGFFDDM) has biased composition (polar residues).

The protein belongs to the LIMR family.

It is found in the cell membrane. Its function is as follows. May associate with G-protein coupled receptors and regulate downstream signaling pathways. The sequence is that of G-protein coupled receptor-associated protein LMBRD2 from Caenorhabditis briggsae.